The chain runs to 590 residues: Leishmanolysin (590 aa).

The N-terminal stretch at 1-39 (MSVDSSSTHRHRSVAARLVRLAAAGAAVIAAVGTAAAWA) is a signal peptide. A propeptide spans 40-87 (HAGAVQHRCIHDAMQARVRQSVARHHTAPGAVSAVGLSYVTLGAAPTV) (activation peptide). 2 disulfides stabilise this stretch: Cys-112–Cys-129 and Cys-178–Cys-217. Residue His-251 participates in Zn(2+) binding. The active site involves Glu-252. His-255 is a binding site for Zn(2+). The N-linked (GlcNAc...) asparagine glycan is linked to Asn-287. 7 cysteine pairs are disulfide-bonded: Cys-301–Cys-373, Cys-380–Cys-443, Cys-393–Cys-412, Cys-402–Cys-477, Cys-454–Cys-498, Cys-503–Cys-553, and Cys-523–Cys-546. Residue His-321 participates in Zn(2+) binding. Asn-565 carries the GPI-anchor amidated asparagine lipid modification. Positions 566–590 (AAAGRRGPRAAATALLVAALLAVAL) are cleaved as a propeptide — removed in mature form.

It belongs to the peptidase M8 family. Zn(2+) serves as cofactor.

It localises to the cell membrane. It catalyses the reaction Preference for hydrophobic residues at P1 and P1' and basic residues at P2' and P3'. A model nonapeptide is cleaved at -Ala-Tyr-|-Leu-Lys-Lys-.. Functionally, has an integral role during the infection of macrophages in the mammalian host. In Leishmania donovani, this protein is Leishmanolysin (gp63).